The chain runs to 820 residues: Protein bicaudal D homolog 2 (820 aa).

Serine 2 is modified (N-acetylserine). Residues 20 to 270 are a coiled coil; the sequence is EWLRAEVKRL…LSHYMSINDS (251 aa). Positions 25–400 are interaction with DYNLL1, DYNC1H1, DYNC1I2, DCTN1 and DCTN2; it reads EVKRLSHELA…RLTENLSALR (376 aa). 3 positions are modified to phosphoserine: serine 190, serine 224, and serine 320. The disordered stretch occupies residues 313 to 332; it reads SSLDNKTSTPRKDGLAPPSP. Threonine 321 carries the post-translational modification Phosphothreonine. The interaction with KIF5A stretch occupies residues 336-595; that stretch reads SDLLSELHIS…LLATEVGRAD (260 aa). A coiled-coil region spans residues 340–539; the sequence is SELHISEIQK…VTFSEELANL (200 aa). Residues serine 345 and serine 397 each carry the phosphoserine modification. Disordered stretches follow at residues 400–427, 563–582, 591–618, and 799–820; these read RRLQAGKERQTSLDNEKDRDSHEDGDYY, QGKAGRTSPEGRGRRSPVLL, VGRADGGTGDNSPSPSSSLPSPLSDPRR, and HEQTRRGRSKAASKAKPASPSL. A compositionally biased stretch (basic and acidic residues) spans 404–424; it reads AGKERQTSLDNEKDRDSHEDG. Phosphoserine is present on residues serine 570 and serine 578. The interval 586–820 is interaction with RANBP2; sequence LLATEVGRAD…SKAKPASPSL (235 aa). At threonine 598 the chain carries Phosphothreonine. The span at 602 to 614 shows a compositional bias: low complexity; sequence SPSPSSSLPSPLS. A coiled-coil region spans residues 662 to 804; that stretch reads DKDKEALMEE…LELDHEQTRR (143 aa). Residues 662–810 are interaction with RAB6A; that stretch reads DKDKEALMEE…QTRRGRSKAA (149 aa). Residue serine 819 is modified to Phosphoserine.

It belongs to the BicD family. Part of a tripartite complex with dynein and dynactin, acts an adapter linking the dynein motor complex and dynactin. Interacts with CPNE4 (via VWFA domain). Interacts with NEK9. Interacts with DCTN2. Interacts with RAB6A. Interacts with DNAI1. Interacts with DYNLL1, DYNC1H1, DYNC1I2 and DCTN1. Forms a complex with dynein and dynactin. The dynein-dynactin-BICD2 ternary complex (DDB) binds preferentially to tyrosinated microtubules than to detyrosinated microtubules. Interacts with RANBP2, RAB6A and KIF5A. Interacts with KIF1C. In terms of processing, phosphorylated by NEK9 in vitro. In terms of tissue distribution, ubiquitously expressed with high expression in the spinal cord.

Its subcellular location is the golgi apparatus. It localises to the cytoplasm. It is found in the cytoskeleton. The protein resides in the nucleus. The protein localises to the nuclear pore complex. Its subcellular location is the nucleus envelope. Functionally, acts as an adapter protein linking the dynein motor complex to various cargos and converts dynein from a non-processive to a highly processive motor in the presence of dynactin. Facilitates and stabilizes the interaction between dynein and dynactin and activates dynein processivity (the ability to move along a microtubule for a long distance without falling off the track). Facilitates the binding of RAB6A to the Golgi by stabilizing its GTP-bound form. Regulates coat complex coatomer protein I (COPI)-independent Golgi-endoplasmic reticulum transport via its interaction with RAB6A and recruitment of the dynein-dynactin motor complex. Contributes to nuclear and centrosomal positioning prior to mitotic entry through regulation of both dynein and kinesin-1. During G2 phase of the cell cycle, associates with RANBP2 at the nuclear pores and recruits dynein and dynactin to the nuclear envelope to ensure proper positioning of the nucleus relative to centrosomes prior to the onset of mitosis. This is Protein bicaudal D homolog 2 (Bicd2) from Mus musculus (Mouse).